We begin with the raw amino-acid sequence, 156 residues long: MSRRNTAVKRSISSDPVYNSQLIHMMISHILKEGKKALAYRLMYDAMKRIEKTTQQDPILVVERAVRNATPTIEVKARRMGGSIYQVPLEVKPERGTALALRWILLAARNRTGRDMVAKLSNELMDASNRIGNAVRKRDEMHRMAEANKAFAHIRV.

Belongs to the universal ribosomal protein uS7 family. As to quaternary structure, part of the 30S ribosomal subunit.

Its subcellular location is the plastid. The protein localises to the chloroplast. Functionally, one of the primary rRNA binding proteins, it binds directly to 16S rRNA where it nucleates assembly of the head domain of the 30S subunit. The protein is Small ribosomal subunit protein uS7c (rps7) of Nephroselmis olivacea (Green alga).